Consider the following 357-residue polypeptide: Cyclin-dependent kinase-like 1 (357 aa).

One can recognise a Protein kinase domain in the interval 4-287 (YEKIGKIGEG…CEQLLHHPYF (284 aa)). Residues 10–18 (IGEGSYGVV) and Lys-33 contribute to the ATP site. The short motif at 45–51 (KKIALRE) is the [NKR]KIAxRE element. The active-site Proton acceptor is the Asp-126.

This sequence belongs to the protein kinase superfamily. CMGC Ser/Thr protein kinase family. CDC2/CDKX subfamily. Highly expressed in kidney, and to a lower extent in ovary.

The protein resides in the cytoplasm. It localises to the nucleus. The enzyme catalyses L-seryl-[protein] + ATP = O-phospho-L-seryl-[protein] + ADP + H(+). The catalysed reaction is L-threonyl-[protein] + ATP = O-phospho-L-threonyl-[protein] + ADP + H(+). This is Cyclin-dependent kinase-like 1 from Homo sapiens (Human).